An 80-amino-acid chain; its full sequence is uncharacterized protein (80 aa).

The chain crosses the membrane as a helical span at residues 12 to 32 (FKIIALILLIVLIINLSYKLF).

It localises to the membrane. This is an uncharacterized protein from Saccharomyces cerevisiae (strain ATCC 204508 / S288c) (Baker's yeast).